The primary structure comprises 428 residues: Serine--tRNA ligase (428 aa).

L-serine is bound at residue 231–233; sequence TAE. ATP is bound at residue 262 to 264; sequence RSE. Residue Glu-285 coordinates L-serine. 349–352 provides a ligand contact to ATP; it reads EISS. Ser-385 contributes to the L-serine binding site.

Belongs to the class-II aminoacyl-tRNA synthetase family. Type-1 seryl-tRNA synthetase subfamily. Homodimer. The tRNA molecule binds across the dimer.

It is found in the cytoplasm. The catalysed reaction is tRNA(Ser) + L-serine + ATP = L-seryl-tRNA(Ser) + AMP + diphosphate + H(+). The enzyme catalyses tRNA(Sec) + L-serine + ATP = L-seryl-tRNA(Sec) + AMP + diphosphate + H(+). The protein operates within aminoacyl-tRNA biosynthesis; selenocysteinyl-tRNA(Sec) biosynthesis; L-seryl-tRNA(Sec) from L-serine and tRNA(Sec): step 1/1. In terms of biological role, catalyzes the attachment of serine to tRNA(Ser). Is also able to aminoacylate tRNA(Sec) with serine, to form the misacylated tRNA L-seryl-tRNA(Sec), which will be further converted into selenocysteinyl-tRNA(Sec). The protein is Serine--tRNA ligase of Staphylococcus epidermidis (strain ATCC 35984 / DSM 28319 / BCRC 17069 / CCUG 31568 / BM 3577 / RP62A).